A 453-amino-acid polypeptide reads, in one-letter code: Phenolic glucoside malonyltransferase 1 (453 aa).

Residue histidine 165 is the Proton acceptor of the active site. The HXXXD motif signature appears at 165-169 (HVAGD). Malonyl-CoA-binding positions include lysine 254, histidine 266, and 268-269 (TS). Residue aspartate 394 is the Proton acceptor of the active site. Positions 394-398 (DFGWG) match the DFGWG motif motif.

The protein belongs to the plant acyltransferase family. Phenolic glucoside malonyltransferase subfamily. Monomer. As to expression, highly expressed in flower. Also expressed in flower bud, stem, root and leaf.

The enzyme catalyses a flavonol 3-O-beta-D-glucoside + malonyl-CoA = a flavonol 3-O-(6-O-malonyl-beta-D-glucoside) + CoA. It catalyses the reaction a flavonol 7-O-beta-D-glucoside + malonyl-CoA = a flavonol 7-O-(6-O-malonyl-beta-D-glucoside) + CoA. Its function is as follows. Malonyltransferase with broad substrate specificity acting on phenolic glucosides including xenobiotic naphthols. Has activity against flavonoid 7-O-glucosides, flavonoid 3-O-glucosides and naphthol glucosides, and to a lesser extent against coumarin glucosides in vitro. Prefers malonyl-CoA as an acyl donor, but also active with succinyl-CoA and methylmalonyl-CoA, but not with acetyl-CoA. This is Phenolic glucoside malonyltransferase 1 from Nicotiana tabacum (Common tobacco).